A 53-amino-acid polypeptide reads, in one-letter code: UPF0391 membrane protein BURPS1106A_A2993 (53 aa).

2 helical membrane-spanning segments follow: residues 5 to 25 and 30 to 50; these read ALIFFIIAIIAAVLGFGGIAA and IAKILFYIFVVIFLVTLVLGV.

This sequence belongs to the UPF0391 family.

It localises to the cell membrane. The protein is UPF0391 membrane protein BURPS1106A_A2993 of Burkholderia pseudomallei (strain 1106a).